A 305-amino-acid chain; its full sequence is Fumarylacetoacetate hydrolase domain-containing protein 2 homolog (305 aa).

Positions 141, 143, and 172 each coordinate a divalent metal cation.

Belongs to the FAH family. Requires Ca(2+) as cofactor. It depends on Mg(2+) as a cofactor.

Functionally, may have hydrolase activity. This Dictyostelium discoideum (Social amoeba) protein is Fumarylacetoacetate hydrolase domain-containing protein 2 homolog (fahd2).